The primary structure comprises 110 residues: uncharacterized protein (110 aa).

Its subcellular location is the plastid. The protein resides in the chloroplast. This is an uncharacterized protein from Auxenochlorella pyrenoidosa (Freshwater green alga).